The sequence spans 580 residues: Arginine--tRNA ligase (580 aa).

The 'HIGH' region signature appears at 131–141; the sequence is ANPTGPLHVGH.

This sequence belongs to the class-I aminoacyl-tRNA synthetase family. As to quaternary structure, monomer.

The protein resides in the cytoplasm. The enzyme catalyses tRNA(Arg) + L-arginine + ATP = L-arginyl-tRNA(Arg) + AMP + diphosphate. The protein is Arginine--tRNA ligase of Roseobacter denitrificans (strain ATCC 33942 / OCh 114) (Erythrobacter sp. (strain OCh 114)).